Consider the following 675-residue polypeptide: Dihydrolipoyllysine-residue acetyltransferase component of pyruvate dehydrogenase complex (675 aa).

The Lipoyl-binding 1 domain maps to 2–77 (AFSVEMPELG…DVGGVIAIIG (76 aa)). Lys43 carries the N6-lipoyllysine modification. A disordered region spans residues 77 to 124 (GDADETPANEAPADEAPAPAEEEEPVKEEPKKEAAPEAPAATGAATDV). Low complexity-rich tracts occupy residues 84 to 95 (ANEAPADEAPAP) and 112 to 124 (PEAP…ATDV). Positions 121-196 (ATDVEMPELG…DVGAVIARIG (76 aa)) constitute a Lipoyl-binding 2 domain. Lys162 is subject to N6-lipoyllysine. The interval 200–240 (AAAAPAEEEAAPAEEEEPVKEEPKKEAAPEAPAATGAATDV) is disordered. Residues 205-218 (AEEEAAPAEEEEPV) are compositionally biased toward acidic residues. A Lipoyl-binding 3 domain is found at 237-312 (ATDVEMPELG…DVGAVIARIG (76 aa)). Lys278 is subject to N6-lipoyllysine. The interval 316 to 368 (AAAAPAEEEAAPAEEEEPVKEEPKKEEPKKEEPKKEAATTPAAASATVSASGD) is disordered. A compositionally biased stretch (acidic residues) spans 321–334 (AEEEAAPAEEEEPV). The span at 335 to 352 (KEEPKKEEPKKEEPKKEA) shows a compositional bias: basic and acidic residues. A compositionally biased stretch (low complexity) spans 353–366 (ATTPAAASATVSAS). One can recognise a Peripheral subunit-binding (PSBD) domain in the interval 372–409 (YVTPLVRKLAEKHGVDLNTVTGTGIGGRIRKQDVLAAA). Residues His645 and Asp649 contribute to the active site.

Belongs to the 2-oxoacid dehydrogenase family. Forms a 24-polypeptide structural core with octahedral symmetry. Part of an unusual ODH/PDH supercomplex, consisting of AceE (E1), AceF (E2), and Lpd (E3) together with OdhA (E1+E2). The cofactor is (R)-lipoate.

The catalysed reaction is N(6)-[(R)-dihydrolipoyl]-L-lysyl-[protein] + acetyl-CoA = N(6)-[(R)-S(8)-acetyldihydrolipoyl]-L-lysyl-[protein] + CoA. Functionally, is essential for both 2-oxoglutarate dehydrogenase (ODH) and pyruvate dehydrogenase (PDH) activities, but AceF has exclusively transacetylase (and no transsuccinylase) activity. The lipoyl residues required for ODH activity are likely provided by AceF. In Corynebacterium glutamicum (strain ATCC 13032 / DSM 20300 / JCM 1318 / BCRC 11384 / CCUG 27702 / LMG 3730 / NBRC 12168 / NCIMB 10025 / NRRL B-2784 / 534), this protein is Dihydrolipoyllysine-residue acetyltransferase component of pyruvate dehydrogenase complex (aceF).